The following is a 577-amino-acid chain: Putative laccase-1 (577 aa).

A signal peptide spans 1–28 (MGTAKIPALLWFLLAGLVLALAVNPAHG). Plastocyanin-like domains follow at residues 37–153 (FITE…PKRG) and 163–316 (KEIP…YTDS). N-linked (GlcNAc...) asparagine glycosylation is found at N42 and N83. Residues H87 and H89 each contribute to the Cu cation site. An N-linked (GlcNAc...) asparagine glycan is attached at N115. 2 residues coordinate Cu cation: H132 and H134. N-linked (GlcNAc...) asparagine glycans are attached at residues N276, N304, N382, and N402. One can recognise a Plastocyanin-like 3 domain in the interval 442–561 (DINGGGPLLT…DTMFIVKDGK (120 aa)). Cu cation contacts are provided by H478, H481, H483, H540, C541, H542, H546, and M551.

It belongs to the multicopper oxidase family. It depends on Cu cation as a cofactor.

Its subcellular location is the secreted. The protein resides in the extracellular space. It is found in the apoplast. It carries out the reaction 4 hydroquinone + O2 = 4 benzosemiquinone + 2 H2O. Lignin degradation and detoxification of lignin-derived products. The sequence is that of Putative laccase-1 (LAC1) from Oryza sativa subsp. japonica (Rice).